A 534-amino-acid chain; its full sequence is CTP synthase (534 aa).

The tract at residues 1 to 268 (MSVKYIFVTG…AKIVCKRLGL (268 aa)) is amidoligase domain. S14 contacts CTP. S14 contacts UTP. An ATP-binding site is contributed by 15–20 (GLGKGI). Y55 is a binding site for L-glutamine. D72 provides a ligand contact to ATP. 2 residues coordinate Mg(2+): D72 and E142. CTP-binding positions include 149 to 151 (DIE), 189 to 194 (KTKPTQ), and K225. Residues 189–194 (KTKPTQ) and K225 each bind UTP. The Glutamine amidotransferase type-1 domain maps to 293 to 534 (TIGLVGKYVE…VRAAYEYKTK (242 aa)). G355 lines the L-glutamine pocket. C382 (nucleophile; for glutamine hydrolysis) is an active-site residue. L-glutamine contacts are provided by residues 383–386 (LGMQ), E406, and R462. Catalysis depends on residues H507 and E509.

It belongs to the CTP synthase family. In terms of assembly, homotetramer.

The enzyme catalyses UTP + L-glutamine + ATP + H2O = CTP + L-glutamate + ADP + phosphate + 2 H(+). The catalysed reaction is L-glutamine + H2O = L-glutamate + NH4(+). It catalyses the reaction UTP + NH4(+) + ATP = CTP + ADP + phosphate + 2 H(+). It participates in pyrimidine metabolism; CTP biosynthesis via de novo pathway; CTP from UDP: step 2/2. Its activity is regulated as follows. Allosterically activated by GTP, when glutamine is the substrate; GTP has no effect on the reaction when ammonia is the substrate. The allosteric effector GTP functions by stabilizing the protein conformation that binds the tetrahedral intermediate(s) formed during glutamine hydrolysis. Inhibited by the product CTP, via allosteric rather than competitive inhibition. Its function is as follows. Catalyzes the ATP-dependent amination of UTP to CTP with either L-glutamine or ammonia as the source of nitrogen. Regulates intracellular CTP levels through interactions with the four ribonucleotide triphosphates. The sequence is that of CTP synthase from Ruminiclostridium cellulolyticum (strain ATCC 35319 / DSM 5812 / JCM 6584 / H10) (Clostridium cellulolyticum).